The primary structure comprises 432 residues: 23S rRNA (uracil(1939)-C(5))-methyltransferase RlmD (432 aa).

The TRAM domain occupies 1–54 (MNPVVDILSLDHEGHGVARLDGKVTFVDGALAGERAEIAIFRKHAKYNSANAVA). The [4Fe-4S] cluster site is built by Cys-67, Cys-73, Cys-76, and Cys-155. Gln-264, Phe-293, Asn-298, Glu-314, Asn-341, and Asp-362 together coordinate S-adenosyl-L-methionine. The active-site Nucleophile is Cys-389.

The protein belongs to the class I-like SAM-binding methyltransferase superfamily. RNA M5U methyltransferase family. RlmD subfamily.

The enzyme catalyses uridine(1939) in 23S rRNA + S-adenosyl-L-methionine = 5-methyluridine(1939) in 23S rRNA + S-adenosyl-L-homocysteine + H(+). Functionally, catalyzes the formation of 5-methyl-uridine at position 1939 (m5U1939) in 23S rRNA. The protein is 23S rRNA (uracil(1939)-C(5))-methyltransferase RlmD of Thiobacillus denitrificans (strain ATCC 25259 / T1).